Here is a 129-residue protein sequence, read N- to C-terminus: Small ribosomal subunit protein uS11 (129 aa).

This sequence belongs to the universal ribosomal protein uS11 family. In terms of assembly, part of the 30S ribosomal subunit. Interacts with proteins S7 and S18. Binds to IF-3.

Its function is as follows. Located on the platform of the 30S subunit, it bridges several disparate RNA helices of the 16S rRNA. Forms part of the Shine-Dalgarno cleft in the 70S ribosome. The protein is Small ribosomal subunit protein uS11 of Parvibaculum lavamentivorans (strain DS-1 / DSM 13023 / NCIMB 13966).